A 338-amino-acid polypeptide reads, in one-letter code: Tetraacyldisaccharide 4'-kinase (338 aa).

Ile67–Thr74 contributes to the ATP binding site.

It belongs to the LpxK family.

The catalysed reaction is a lipid A disaccharide + ATP = a lipid IVA + ADP + H(+). It functions in the pathway glycolipid biosynthesis; lipid IV(A) biosynthesis; lipid IV(A) from (3R)-3-hydroxytetradecanoyl-[acyl-carrier-protein] and UDP-N-acetyl-alpha-D-glucosamine: step 6/6. Functionally, transfers the gamma-phosphate of ATP to the 4'-position of a tetraacyldisaccharide 1-phosphate intermediate (termed DS-1-P) to form tetraacyldisaccharide 1,4'-bis-phosphate (lipid IVA). In Acidovorax ebreus (strain TPSY) (Diaphorobacter sp. (strain TPSY)), this protein is Tetraacyldisaccharide 4'-kinase.